The following is a 1081-amino-acid chain: Zinc finger protein 827 (1081 aa).

Basic and acidic residues predominate over residues 1 to 10; sequence MPRRKQEQPK. Residues 1-14 are mediates direct interaction with RBBP4; that stretch reads MPRRKQEQPKRLPS. Residues 1 to 77 are disordered; it reads MPRRKQEQPK…DTSLGSTTPS (77 aa). An RRK motif; mediates NuRD recruitment to telomeres motif is present at residues 3 to 5; it reads RRK. Residues 62–77 are compositionally biased toward polar residues; that stretch reads EQSTSPDTSLGSTTPS. Glycyl lysine isopeptide (Lys-Gly) (interchain with G-Cter in SUMO2) cross-links involve residues lysine 176, lysine 216, and lysine 226. Disordered regions lie at residues 258-280 and 305-348; these read KKVS…SFLS and EKSS…SLEL. The span at 327 to 344 shows a compositional bias: pro residues; that stretch reads VSPPPPPPPPPPPPPPPQ. Residues lysine 360 and lysine 372 each participate in a glycyl lysine isopeptide (Lys-Gly) (interchain with G-Cter in SUMO2) cross-link. C2H2-type zinc fingers lie at residues 374-396, 402-424, and 433-455; these read FQCP…MVIH, HQCP…MKVH, and FQCQ…MRCH. Residues lysine 466, lysine 475, lysine 523, lysine 549, lysine 580, lysine 587, and lysine 597 each participate in a glycyl lysine isopeptide (Lys-Gly) (interchain with G-Cter in SUMO2) cross-link. A disordered region spans residues 525-553; that stretch reads EPKEDNGLPTSFTLNTADRPANHTKLKDP. Residues 616–627 are compositionally biased toward polar residues; sequence VFSPESEVSTPG. The segment at 616–640 is disordered; that stretch reads VFSPESEVSTPGVSEDALKPQEGKG. Over residues 631–640 the composition is skewed to basic and acidic residues; the sequence is DALKPQEGKG. Glycyl lysine isopeptide (Lys-Gly) (interchain with G-Cter in SUMO2) cross-links involve residues lysine 634, lysine 639, and lysine 658. Residue lysine 673 forms a Glycyl lysine isopeptide (Lys-Gly) (interchain with G-Cter in SUMO1); alternate linkage. A Glycyl lysine isopeptide (Lys-Gly) (interchain with G-Cter in SUMO2); alternate cross-link involves residue lysine 673. Glycyl lysine isopeptide (Lys-Gly) (interchain with G-Cter in SUMO2) cross-links involve residues lysine 704, lysine 710, lysine 742, lysine 778, and lysine 798. C2H2-type zinc fingers lie at residues 817-839 and 845-867; these read FPCD…LSLH and YKCH…LTVH. Glycyl lysine isopeptide (Lys-Gly) (interchain with G-Cter in SUMO2) cross-links involve residues lysine 870 and lysine 891. 2 consecutive C2H2-type zinc fingers follow at residues 897 to 919 and 929 to 952; these read YSCH…MSLH and ICCT…GTKH. Residues 947-960 show a composition bias toward basic and acidic residues; the sequence is HIGTKHTGEDRKTP. Residues 947 to 1013 are disordered; the sequence is HIGTKHTGED…GSQPSLNSEE (67 aa). A Glycyl lysine isopeptide (Lys-Gly) (interchain with G-Cter in SUMO2) cross-link involves residue lysine 958. Residues 961–978 show a composition bias toward low complexity; sequence SESNSPSSSSLSALSDSA. Basic and acidic residues predominate over residues 979 to 988; the sequence is NSKDDSDGSQ. Lysine 1014 is covalently cross-linked (Glycyl lysine isopeptide (Lys-Gly) (interchain with G-Cter in SUMO2)). 2 consecutive C2H2-type zinc fingers follow at residues 1019–1041 and 1047–1069; these read FECV…LQIH and FECD…KKCH.

It belongs to the krueppel C2H2-type zinc-finger protein family. As to quaternary structure, part of a transcription inhibitory ribonucleoprotein complex composed at least of the circular RNA circZNF827, HNRNPK and HNRNPL. Interacts with the nucleosome remodeling and histone deacetylase/NuRD complex. Interacts with RBBP4; the interaction is direct and recruits RBBP4, a component of the NuRD complex, to telomeres.

It localises to the nucleus. The protein localises to the chromosome. The protein resides in the telomere. In terms of biological role, as part of a ribonucleoprotein complex composed at least of HNRNPK, HNRNPL and the circular RNA circZNF827 that nucleates the complex on chromatin, may negatively regulate the transcription of genes involved in neuronal differentiation. Could also recruit the nucleosome remodeling and histone deacetylase/NuRD complex to telomeric regions of chromosomes to regulate chromatin remodeling as part of telomere maintenance. In Macaca fascicularis (Crab-eating macaque), this protein is Zinc finger protein 827 (ZNF827).